The chain runs to 307 residues: Protoheme IX farnesyltransferase (307 aa).

Transmembrane regions (helical) follow at residues 28 to 48, 50 to 70, 100 to 120, 122 to 142, 149 to 169, 176 to 196, 218 to 238, 243 to 263, and 282 to 302; these read VTQL…PGMV, WPVL…AFAI, ILLF…VFAN, LTMW…TLLL, NIVI…AAVA, AWIL…ALAL, FTLL…ILPF, SGYL…VHAW, and IVYL…KFGP.

The protein belongs to the UbiA prenyltransferase family. Protoheme IX farnesyltransferase subfamily.

It is found in the cell inner membrane. It carries out the reaction heme b + (2E,6E)-farnesyl diphosphate + H2O = Fe(II)-heme o + diphosphate. The protein operates within porphyrin-containing compound metabolism; heme O biosynthesis; heme O from protoheme: step 1/1. Functionally, converts heme B (protoheme IX) to heme O by substitution of the vinyl group on carbon 2 of heme B porphyrin ring with a hydroxyethyl farnesyl side group. The protein is Protoheme IX farnesyltransferase of Ralstonia nicotianae (strain ATCC BAA-1114 / GMI1000) (Ralstonia solanacearum).